The chain runs to 158 residues: uncharacterized protein (158 aa).

Positions 12-73 (LDEIDRAILR…LINPFKAGYE (62 aa)) constitute an HTH asnC-type domain. A DNA-binding region (H-T-H motif) is located at residues 31-50 (YSEISRRINVPESTVRARVN).

This is an uncharacterized protein from Pyrococcus abyssi (strain GE5 / Orsay).